The following is a 500-amino-acid chain: MDLQLQIPSYPIIFSFFIFIFMLIKIWKKQTQTSIFPPGPFKFPIVGNIPQLATGGTLPHHRLRDLAKIYGPIMTIQLGQVKSVVISSPETAKEVLKTQDIQFADRPLLLAGEMVLYNRKDILYGTYGDQWRQMRKICTLELLSAKRIQSFKSVREKEVESFIKTLRSKSGIPVNLTNAVFELTNTIMMITTIGQKCKNQEAVMSVIDRVSEAAAGFSVADVFPSLKFLHYLSGEKTKLQKLHKETDQILEEIISEHKANAKVGAQADNLLDVLLDLQKNGNLQVPLTNDNIKAATLEMFGAGSDTSSKTTDWAMAQMMRKPTTMKKAQEEVRRVFGENGKVEESRIQELKYLKLVVKETLRLHPAVALIPRECREKTKIDGFDIYPKTKILVNPWAIGRDPKVWNEPESFNPERFQDSPIDYKGTNFELIPFGAGKRICPGMTLGITNLELFLANLLYHFDWKFPDGITSENLDMTEAIGGAIKRKLDLELISIPYTSS.

A helical; Signal-anchor for type II membrane protein transmembrane segment spans residues 7 to 27 (IPSYPIIFSFFIFIFMLIKIW). Residue Cys-440 participates in heme binding.

This sequence belongs to the cytochrome P450 family. It depends on heme as a cofactor. In terms of tissue distribution, expressed in mature seeds.

It localises to the membrane. The enzyme catalyses (-)-casbene + reduced [NADPH--hemoprotein reductase] + O2 = 4-hydroxycasbene + oxidized [NADPH--hemoprotein reductase] + H2O + H(+). The catalysed reaction is 8-hydroxycasbene + reduced [NADPH--hemoprotein reductase] + O2 = 4,8-dihydroxycasbene + oxidized [NADPH--hemoprotein reductase] + H2O + H(+). It carries out the reaction 4,8-dihydroxycasbene + reduced [NADPH--hemoprotein reductase] + O2 = 4,5,8-trihydroxycasbene + oxidized [NADPH--hemoprotein reductase] + H2O + H(+). It participates in secondary metabolite biosynthesis; terpenoid biosynthesis. Functionally, involved in the biosynthesis of macrocyclic lathyrane type diterpenoids (also called Euphorbia factors) natural products, including the cyclization route from casbene to jolkinol C, a precursor for ingenol mebutate that is used to treat actinic keratosis, a precancerous skin condition. Catalyzes the hydroxylation of (-)-casbene and 8-hydroxycasbene to produce 4-hydroxycasbene and 4,8-dihydroxycasbene, respectively. The sequence is that of Cytochrome P450 726A27 from Euphorbia lathyris (Caper spurge).